A 252-amino-acid chain; its full sequence is Phosphoglycolate phosphatase (252 aa).

Asp13 acts as the Nucleophile in catalysis. Residues Asp13, Asp15, and Asp192 each contribute to the Mg(2+) site.

Belongs to the HAD-like hydrolase superfamily. CbbY/CbbZ/Gph/YieH family. Monomer. It depends on Mg(2+) as a cofactor. Chloride serves as cofactor.

The catalysed reaction is 2-phosphoglycolate + H2O = glycolate + phosphate. It participates in organic acid metabolism; glycolate biosynthesis; glycolate from 2-phosphoglycolate: step 1/1. Functionally, specifically catalyzes the dephosphorylation of 2-phosphoglycolate. Is involved in the dissimilation of the intracellular 2-phosphoglycolate formed during the DNA repair of 3'-phosphoglycolate ends, a major class of DNA lesions induced by oxidative stress. This Escherichia coli O157:H7 protein is Phosphoglycolate phosphatase.